A 1013-amino-acid polypeptide reads, in one-letter code: PHD finger protein 20-like protein 1 (1013 aa).

The Tudor 1 domain maps to 11–71; it reads ITFEIGARLE…SNRLRPLERP (61 aa). Residues K75 and K79 each participate in a glycyl lysine isopeptide (Lys-Gly) (interchain with G-Cter in SUMO2) cross-link. The Tudor 2 domain maps to 85–141; it reads FDFKAGEEVLARWTDCRYYPAKIEAINKEGTFTVQFYDGVIRCLKRMHIKAMPEDAK. Disordered regions lie at residues 183–206, 309–368, 389–454, and 482–511; these read AKNKTGTKPRASANSNKEKERDGG, EQAI…TPKS, VINK…QSSV, and VTGSRTPHPSYHGGECPREEKEETPLFANP. Over residues 315–346 the composition is skewed to polar residues; that stretch reads KPQSQKKNEAVISSSANTQKPALLSSTLSSGK. S368 is modified (phosphoserine). Positions 404-415 are enriched in basic residues; it reads PCKHSERRRRSQ. Phosphoserine is present on S432. The span at 443–453 shows a compositional bias: low complexity; that stretch reads SISSQNQQQSS. The span at 496 to 505 shows a compositional bias: basic and acidic residues; the sequence is ECPREEKEET. K530 participates in a covalent cross-link: Glycyl lysine isopeptide (Lys-Gly) (interchain with G-Cter in SUMO2). A compositionally biased stretch (basic and acidic residues) spans 533-565; sequence KKVKLEEKTSTAFGKRKEKDKEKKEKRDKDHYK. The segment at 533 to 585 is disordered; the sequence is KKVKLEEKTSTAFGKRKEKDKEKKEKRDKDHYKPKQKKKKKKKKKSKQHDYSD. Residues 566–579 show a composition bias toward basic residues; sequence PKQKKKKKKKKKSK. The PHD-type zinc-finger motif lies at 681 to 729; sequence IVRCICELDEENGFMIQCEECLCWQHSVCMGLLEDSIPEQYICYICRDP. Positions 824-852 are enriched in basic and acidic residues; the sequence is RKITPQDRANSEGKECVQNHKEPALRMEE. The tract at residues 824–911 is disordered; sequence RKITPQDRAN…LLYKNRGVSE (88 aa). The span at 854–878 shows a compositional bias: polar residues; the sequence is YITSEHSYQKPQSFSQDCQSLTDPG. Residues 879–892 show a composition bias toward acidic residues; it reads SSDDDDASSFEEDG. The residue at position 905 (K905) is an N6-acetyllysine.

As to quaternary structure, interacts with methylated DNMT1 (DNMT1K142me1). Interacts with SOX2.

The protein localises to the nucleus. In terms of biological role, is a negative regulator of proteasomal degradation of a set of methylated proteins, including DNMT1 and SOX2. Involved in the maintainance of embryonic stem cells pluripotency, through the regulation of SOX2 levels. This chain is PHD finger protein 20-like protein 1 (Phf20l1), found in Mus musculus (Mouse).